Reading from the N-terminus, the 52-residue chain is Large ribosomal subunit protein eL39 (52 aa).

It belongs to the eukaryotic ribosomal protein eL39 family. As to quaternary structure, interacts with YIH1.

The polypeptide is Large ribosomal subunit protein eL39 (RPL39) (Encephalitozoon cuniculi (strain GB-M1) (Microsporidian parasite)).